The chain runs to 134 residues: uncharacterized protein (134 aa).

This is an uncharacterized protein from Bacillus subtilis (strain 168).